Here is a 183-residue protein sequence, read N- to C-terminus: Interleukin-24 (183 aa).

A signal peptide spans 1-28 (MQTSLRQQILPGLSLILLVLNQVPELQG). Cys-36 and Cys-83 are oxidised to a cystine. N-linked (GlcNAc...) asparagine glycosylation is present at Asn-76. Residue Lys-99 forms a Glycyl lysine isopeptide (Lys-Gly) (interchain with G-Cter in ubiquitin) linkage.

The protein belongs to the IL-10 family. Post-translationally, glycosylated. In terms of processing, ubiquitination at Lys-99 promotes proteasomal degradation.

The protein localises to the secreted. In terms of biological role, multifunctional cytokine mainly produced by T-cells that plays a regulatory role in immune response, tissue homeostasis, host defense, and oncogenesis. Possesses antiviral functions and induces the type I interferon response during influenza infection. Signals through two receptor complexes IL20RA/IL20RB or IL20RB/IL22RA1. In turn, stimulates the JAK1-STAT3 and MAPK pathways and promotes the secretion of pro-inflammatory mediators including IL8 and MMP1. Intracellularly, maintains endoplasmic reticulum homeostasis by restricting the eIF2alpha-CHOP pathway-mediated stress signal. In addition, acts as a quality control mechanism for the ubiquitin proteasome system by alerting the cell to proteasome dysfunction through activation of PKR/EIF2AK2. This is Interleukin-24 (Il24) from Rattus norvegicus (Rat).